A 102-amino-acid polypeptide reads, in one-letter code: Small ribosomal subunit protein uS17 (102 aa).

Over residues 1 to 15 (MTDETASQEASQSTD) the composition is skewed to polar residues. Residues 1-20 (MTDETASQEASQSTDAAAPA) are disordered.

It belongs to the universal ribosomal protein uS17 family. As to quaternary structure, part of the 30S ribosomal subunit.

Its function is as follows. One of the primary rRNA binding proteins, it binds specifically to the 5'-end of 16S ribosomal RNA. The polypeptide is Small ribosomal subunit protein uS17 (Frankia casuarinae (strain DSM 45818 / CECT 9043 / HFP020203 / CcI3)).